The following is a 1089-amino-acid chain: MGDGAEIVTRLYGDEKKLAEDGRISELVGSDEVKDNEEEVFEEAIGSQEGLKPESLKTDVLQEDFPLASNDEVCDLEETSRNERGVENLKVNYSEIGESHGEVNEQCITTKEADSDLVTLKMNDYDHGEVADADISYGKMASSLDVVENSEKATSNLATEDVNLENGNTHSSSENGVVSPDENKELVAEVISVSACSVETGSNGIDDEKWEEEIDVSAGMVTEQRNGKTGAEFNSVKIVSGDKSLNDSIEVAAGTLSPLEKSSSEEKGETESQNSNGGHDIQSNKEIVKQQDSSVNIGPEIKESQHMERESEVLSSVSPTESRSDTAALPPARPAGLGRAAPLLEPAPRVTQQPRVNGNVSHNQPQQAEDSTTAETDEHDETREKLQFIRVKFLRLSHRLGQTPHNVVVAQVLYRLGLAEQLRGRNGSRVGAFSFDRASAMAEQLEAAAQDPLDFSCTIMVLGKSGVGKSATINSIFDELKISTDAFQVGTKKVQDIEGFVQGIKVRVIDTPGLLPSWSDQHKNEKILKSVRAFIKKSPPDIVLYLDRLDMQSRDSGDMPLLRTITDVFGPSIWFNAIVGLTHAASAPPDGPNGTASSYDMFVTQRSHVIQQAIRQAAGDMRLMNPVSLVENHSACRTNRAGQRVLPNGQVWKPHLLLLSFASKILAEANALLKLQDNIPGGQFATRSKAPPLPLLLSSLLQSRPQAKLPEQQYDDEDDEDDLDESSDSEEESEYDELPPFKRLTKAEMTKLSKSQKKEYLDEMEYREKLFMKRQMKEERKRRKLLKKFAAEIKDMPNGYSENVEEERSEPASVPVPMPDLSLPASFDSDNPTHRYRYLDTSNQWLVRPVLETHGWDHDIGYEGVNAERLFVVKDKIPVSFSGQVTKDKKDAHVQLELASSVKHGEGRSTSLGFDMQNAGKELAYTIRSETRFNKFRKNKAAAGLSVTLLGDSVSAGLKVEDKLIANKRFRMVMSGGAMTSRGDVAYGGTLEAQFRDKDYPLGRFLSTLGLSVMDWHGDLAIGGNIQSQVPIGRSSNLIARANLNNRGAGQVSIRVNSSEQLQLAVVALVPLFKKLLTYYSPEQMQYGH.

At Gly2 the chain carries N-acetylglycine. 3 disordered regions span residues 158 to 179 (ATED…GVVS), 255 to 339 (TLSP…GLGR), and 353 to 381 (QPRV…EHDE). Over residues 165-176 (ENGNTHSSSENG) the composition is skewed to polar residues. Residues Ser179, Ser263, and Ser283 each carry the phosphoserine modification. A compositionally biased stretch (basic and acidic residues) spans 300–312 (EIKESQHMERESE). Residues 327–339 (AALPPARPAGLGR) are compositionally biased toward low complexity. Polar residues predominate over residues 353-374 (QPRVNGNVSHNQPQQAEDSTTA). Positions 454-683 (DFSCTIMVLG…KLQDNIPGGQ (230 aa)) constitute an AIG1-type G domain. A G1 region spans residues 463–470 (GKSGVGKS). GTP contacts are provided by residues 466 to 471 (GVGKSA) and 485 to 490 (DAFQVG). Residue Ser470 coordinates Mg(2+). Residues 485-488 (DAFQ) are homodimerization. The tract at residues 489 to 493 (VGTKK) is G2. Residues 510–513 (DTPG) form a G3 region. The interval 548-553 (RLDMQS) is homodimerization. Residues 582–585 (THAA) form a G4 region. Residues His583 and 631 to 632 (EN) contribute to the GTP site. A G5 region spans residues 631 to 633 (ENH). The disordered stretch occupies residues 710–748 (PEQQYDDEDDEDDLDESSDSEEESEYDELPPFKRLTKAE). Residues 713 to 737 (QYDDEDDEDDLDESSDSEEESEYDE) are compositionally biased toward acidic residues. Residues 767 to 788 (REKLFMKRQMKEERKRRKLLKK) adopt a coiled-coil conformation. A helical transmembrane segment spans residues 1064–1080 (LAVVALVPLFKKLLTYY).

It belongs to the TRAFAC class TrmE-Era-EngA-EngB-Septin-like GTPase superfamily. AIG1/Toc34/Toc159-like paraseptin GTPase family. TOC159 subfamily. Homodimer. Part of the TOC core complex that includes 1 protein for the specific recognition of transit peptides surrounded by a ring composed of four proteins forming translocation channels, and four to five GTP-binding proteins providing energy. This core complex can interact with components of the TIC complex to form a larger import complex. Chloroplastic protein precursor such as prSS (precursor of the RuBisCO small subunit) interacts with these complexes. The TOC complex contains a specific subset of polar lipids such as digalactosyldiacylglyceride (DGDG), phosphatidylcholine (PC) and phosphatidylglycerol (PG). Mg(2+) serves as cofactor. Post-translationally, phosphorylated by KOC1. Expressed in seedlings, flowers, and roots.

It is found in the plastid. It localises to the chloroplast outer membrane. The protein resides in the cytoplasm. Its function is as follows. GTPase involved in protein precursor import into chloroplasts. Seems to recognize chloroplast-destined precursor proteins and regulate their presentation to the translocation channel through GTP hydrolysis. Probably specialized in the import of nuclear encoded non-photosynthetic preproteins from the cytoplasm to the chloroplast. This chain is Translocase of chloroplast 120, chloroplastic, found in Arabidopsis thaliana (Mouse-ear cress).